Consider the following 382-residue polypeptide: 1-deoxy-D-xylulose 5-phosphate reductoisomerase (382 aa).

6 residues coordinate NADPH: Thr10, Gly11, Ser12, Ile13, Gly36, and Asn122. Lys123 is a binding site for 1-deoxy-D-xylulose 5-phosphate. Glu124 lines the NADPH pocket. Position 148 (Asp148) interacts with Mn(2+). 4 residues coordinate 1-deoxy-D-xylulose 5-phosphate: Ser149, Glu150, Ser174, and His197. Residue Glu150 participates in Mn(2+) binding. Gly203 is a binding site for NADPH. 1-deoxy-D-xylulose 5-phosphate-binding residues include Ser210, Asn215, Lys216, and Glu219. Glu219 is a Mn(2+) binding site.

The protein belongs to the DXR family. Mg(2+) serves as cofactor. Mn(2+) is required as a cofactor.

It catalyses the reaction 2-C-methyl-D-erythritol 4-phosphate + NADP(+) = 1-deoxy-D-xylulose 5-phosphate + NADPH + H(+). It functions in the pathway isoprenoid biosynthesis; isopentenyl diphosphate biosynthesis via DXP pathway; isopentenyl diphosphate from 1-deoxy-D-xylulose 5-phosphate: step 1/6. Its function is as follows. Catalyzes the NADPH-dependent rearrangement and reduction of 1-deoxy-D-xylulose-5-phosphate (DXP) to 2-C-methyl-D-erythritol 4-phosphate (MEP). The sequence is that of 1-deoxy-D-xylulose 5-phosphate reductoisomerase from Prosthecochloris aestuarii (strain DSM 271 / SK 413).